The sequence spans 44 residues: MVQCVRHFVLPRLKKDAGLPFFFPLITHSQPLNRGAFFCPGVRR.

The protein is pyr operon leader peptide (pyrL) of Escherichia coli O157:H7.